We begin with the raw amino-acid sequence, 228 residues long: LexA repressor (228 aa).

A DNA-binding region (H-T-H motif) is located at residues 28–48; that stretch reads IREIGEALDIRSTNGVNDHLK. Catalysis depends on for autocatalytic cleavage activity residues S146 and K183.

It belongs to the peptidase S24 family. In terms of assembly, homodimer.

The catalysed reaction is Hydrolysis of Ala-|-Gly bond in repressor LexA.. Functionally, represses a number of genes involved in the response to DNA damage (SOS response), including recA and lexA. In the presence of single-stranded DNA, RecA interacts with LexA causing an autocatalytic cleavage which disrupts the DNA-binding part of LexA, leading to derepression of the SOS regulon and eventually DNA repair. The protein is LexA repressor of Anaeromyxobacter dehalogenans (strain 2CP-1 / ATCC BAA-258).